Here is a 122-residue protein sequence, read N- to C-terminus: Large ribosomal subunit protein uL22 (122 aa).

The segment at 102-122 is disordered; that stretch reads VAEGKEMKSSKSHKKNQAEGK.

The protein belongs to the universal ribosomal protein uL22 family. In terms of assembly, part of the 50S ribosomal subunit.

In terms of biological role, this protein binds specifically to 23S rRNA; its binding is stimulated by other ribosomal proteins, e.g. L4, L17, and L20. It is important during the early stages of 50S assembly. It makes multiple contacts with different domains of the 23S rRNA in the assembled 50S subunit and ribosome. Functionally, the globular domain of the protein is located near the polypeptide exit tunnel on the outside of the subunit, while an extended beta-hairpin is found that lines the wall of the exit tunnel in the center of the 70S ribosome. The polypeptide is Large ribosomal subunit protein uL22 (Helicobacter pylori (strain G27)).